The sequence spans 201 residues: Dephospho-CoA kinase (201 aa).

One can recognise a DPCK domain in the interval 3 to 201 (IIGLTGGMAA…ALLHRLREAS (199 aa)). 11-16 (AAGKST) lines the ATP pocket.

It belongs to the CoaE family.

The protein resides in the cytoplasm. The catalysed reaction is 3'-dephospho-CoA + ATP = ADP + CoA + H(+). It participates in cofactor biosynthesis; coenzyme A biosynthesis; CoA from (R)-pantothenate: step 5/5. Catalyzes the phosphorylation of the 3'-hydroxyl group of dephosphocoenzyme A to form coenzyme A. This chain is Dephospho-CoA kinase, found in Gluconobacter oxydans (strain 621H) (Gluconobacter suboxydans).